Reading from the N-terminus, the 116-residue chain is Large ribosomal subunit protein uL18 (116 aa).

It belongs to the universal ribosomal protein uL18 family. As to quaternary structure, part of the 50S ribosomal subunit; part of the 5S rRNA/L5/L18/L25 subcomplex. Contacts the 5S and 23S rRNAs.

This is one of the proteins that bind and probably mediate the attachment of the 5S RNA into the large ribosomal subunit, where it forms part of the central protuberance. This Shewanella piezotolerans (strain WP3 / JCM 13877) protein is Large ribosomal subunit protein uL18.